A 284-amino-acid polypeptide reads, in one-letter code: 4-diphosphocytidyl-2-C-methyl-D-erythritol kinase (284 aa).

Residue K14 is part of the active site. 98–108 (PMGGGLGGGSS) provides a ligand contact to ATP. The active site involves D140.

This sequence belongs to the GHMP kinase family. IspE subfamily.

It catalyses the reaction 4-CDP-2-C-methyl-D-erythritol + ATP = 4-CDP-2-C-methyl-D-erythritol 2-phosphate + ADP + H(+). It participates in isoprenoid biosynthesis; isopentenyl diphosphate biosynthesis via DXP pathway; isopentenyl diphosphate from 1-deoxy-D-xylulose 5-phosphate: step 3/6. In terms of biological role, catalyzes the phosphorylation of the position 2 hydroxy group of 4-diphosphocytidyl-2C-methyl-D-erythritol. The chain is 4-diphosphocytidyl-2-C-methyl-D-erythritol kinase from Shewanella piezotolerans (strain WP3 / JCM 13877).